A 234-amino-acid chain; its full sequence is Thymidylate kinase (234 aa).

Gly10 to Thr17 contributes to the ATP binding site.

This sequence belongs to the thymidylate kinase family.

It catalyses the reaction dTMP + ATP = dTDP + ADP. In terms of biological role, phosphorylation of dTMP to form dTDP in both de novo and salvage pathways of dTTP synthesis. The sequence is that of Thymidylate kinase from Cyanothece sp. (strain PCC 7425 / ATCC 29141).